The following is a 445-amino-acid chain: Probable D-serine dehydratase (445 aa).

Residue lysine 111 is modified to N6-(pyridoxal phosphate)lysine.

The protein belongs to the serine/threonine dehydratase family. DsdA subfamily. It depends on pyridoxal 5'-phosphate as a cofactor.

It carries out the reaction D-serine = pyruvate + NH4(+). This chain is Probable D-serine dehydratase, found in Burkholderia pseudomallei (strain K96243).